The chain runs to 199 residues: Chaperone protein TorD (199 aa).

Belongs to the TorD/DmsD family. TorD subfamily.

The protein localises to the cytoplasm. Its function is as follows. Involved in the biogenesis of TorA. Acts on TorA before the insertion of the molybdenum cofactor and, as a result, probably favors a conformation of the apoenzyme that is competent for acquiring the cofactor. The polypeptide is Chaperone protein TorD (Escherichia coli O127:H6 (strain E2348/69 / EPEC)).